The sequence spans 122 residues: Large ribosomal subunit protein bL12 (122 aa).

Belongs to the bacterial ribosomal protein bL12 family. As to quaternary structure, homodimer. Part of the ribosomal stalk of the 50S ribosomal subunit. Forms a multimeric L10(L12)X complex, where L10 forms an elongated spine to which 2 to 4 L12 dimers bind in a sequential fashion. Binds GTP-bound translation factors.

Forms part of the ribosomal stalk which helps the ribosome interact with GTP-bound translation factors. Is thus essential for accurate translation. In Staphylococcus saprophyticus subsp. saprophyticus (strain ATCC 15305 / DSM 20229 / NCIMB 8711 / NCTC 7292 / S-41), this protein is Large ribosomal subunit protein bL12.